The chain runs to 460 residues: Argininosuccinate lyase (460 aa).

It belongs to the lyase 1 family. Argininosuccinate lyase subfamily.

Its subcellular location is the cytoplasm. The enzyme catalyses 2-(N(omega)-L-arginino)succinate = fumarate + L-arginine. It functions in the pathway amino-acid biosynthesis; L-arginine biosynthesis; L-arginine from L-ornithine and carbamoyl phosphate: step 3/3. The sequence is that of Argininosuccinate lyase from Oleidesulfovibrio alaskensis (strain ATCC BAA-1058 / DSM 17464 / G20) (Desulfovibrio alaskensis).